The sequence spans 238 residues: uncharacterized protein (238 aa).

The next 4 membrane-spanning stretches (helical) occupy residues 13-33, 40-60, 107-127, and 140-160; these read TLFF…FGII, GSVG…LILG, VVLI…FCQV, and VISL…PMAF. 4Fe-4S ferredoxin-type domains lie at 178 to 208 and 204 to 233; these read PFFQ…TEKL and ITEK…FSYA. The [4Fe-4S] cluster site is built by C188, C191, C194, C198, C213, C216, C219, and C223.

The protein resides in the cell membrane. This is an uncharacterized protein from Methanocaldococcus jannaschii (strain ATCC 43067 / DSM 2661 / JAL-1 / JCM 10045 / NBRC 100440) (Methanococcus jannaschii).